Reading from the N-terminus, the 498-residue chain is MRTNPTTSSPVVSTLEEKNLGRIAQIIGPVLDVVFPPGKMPNIYNALVVKSRDTVGQQINVTCEVQQLLGNNRVRAVAMSATDGLMRGMEVIDTGAPLSVPVGGATLGRIFNVLGEPVDNLGPVDTRTTSPIHRSAPAFIQLDTKLSIFETGIKVVDLLAPYRRGGKIGLFGGAGVGKTVLIMELINNIAKAHGGVSVFGGVGERTREGNDLYMEMKESGVINEKNIAESKVALVYGQMNEPPGARMRVGLTALTMAEYFRDVNEQDVLLFIDNIFRFVQAGSEVSALLGRMPSAVGYQPTLSTEMGSLQERITSTKEGSITSIQAVYVPADDLTDPAPATTFAHLDATTVLSRVLAAKGIYPAVDPLDSTSTMLQPRIVGEEHYETAQRVKQTSQRYKELQDIIAILGLDELSEEDRLTVARARKMERFLSQPFFVAEVFTGSPGKYVGLAETIRGFQLILSGELDGLPEQAFYLVGNIDEATAKAMNLEVESKLKK.

172–179 (GGAGVGKT) contributes to the ATP binding site.

The protein belongs to the ATPase alpha/beta chains family. F-type ATPases have 2 components, CF(1) - the catalytic core - and CF(0) - the membrane proton channel. CF(1) has five subunits: alpha(3), beta(3), gamma(1), delta(1), epsilon(1). CF(0) has four main subunits: a(1), b(1), b'(1) and c(9-12).

Its subcellular location is the plastid. It localises to the chloroplast thylakoid membrane. It carries out the reaction ATP + H2O + 4 H(+)(in) = ADP + phosphate + 5 H(+)(out). In terms of biological role, produces ATP from ADP in the presence of a proton gradient across the membrane. The catalytic sites are hosted primarily by the beta subunits. This is ATP synthase subunit beta, chloroplastic from Phoenix dactylifera (Date palm).